The following is a 253-amino-acid chain: HTH-type transcriptional repressor DasR (253 aa).

An HTH gntR-type domain is found at 16-86 (RAQRVPKYYR…QGKGTFVAKP (71 aa)). The segment at residues 46–65 (ERTLAAEFDTSRTTVPQALQ) is a DNA-binding region (H-T-H motif).

The protein localises to the cytoplasm. Global regulator that is part of the nutrient-sensing system. In the absence of glucosamine 6-P (GlcN6P), represses the phosphotransferase system (PTS) specific for the uptake of N-acetylglucosamine (PTSNag), and genes involved in the metabolism of chitin, as well as several genes involved in development, thereby linking carbon availability to morphogenesis. Regulates the dasABC transport operon involved in glucose-related morphogenesis. Essential for development. This chain is HTH-type transcriptional repressor DasR (dasR), found in Streptomyces griseus.